We begin with the raw amino-acid sequence, 132 residues long: Large ribosomal subunit protein uL14 (132 aa).

It belongs to the universal ribosomal protein uL14 family. In terms of assembly, part of the 50S ribosomal subunit. Forms a cluster with proteins L3 and L24e, part of which may contact the 16S rRNA in 2 intersubunit bridges.

Functionally, binds to 23S rRNA. Forms part of two intersubunit bridges in the 70S ribosome. The chain is Large ribosomal subunit protein uL14 from Archaeoglobus fulgidus (strain ATCC 49558 / DSM 4304 / JCM 9628 / NBRC 100126 / VC-16).